A 95-amino-acid chain; its full sequence is Aspartyl/glutamyl-tRNA(Asn/Gln) amidotransferase subunit C (95 aa).

It belongs to the GatC family. As to quaternary structure, heterotrimer of A, B and C subunits.

It carries out the reaction L-glutamyl-tRNA(Gln) + L-glutamine + ATP + H2O = L-glutaminyl-tRNA(Gln) + L-glutamate + ADP + phosphate + H(+). It catalyses the reaction L-aspartyl-tRNA(Asn) + L-glutamine + ATP + H2O = L-asparaginyl-tRNA(Asn) + L-glutamate + ADP + phosphate + 2 H(+). In terms of biological role, allows the formation of correctly charged Asn-tRNA(Asn) or Gln-tRNA(Gln) through the transamidation of misacylated Asp-tRNA(Asn) or Glu-tRNA(Gln) in organisms which lack either or both of asparaginyl-tRNA or glutaminyl-tRNA synthetases. The reaction takes place in the presence of glutamine and ATP through an activated phospho-Asp-tRNA(Asn) or phospho-Glu-tRNA(Gln). The polypeptide is Aspartyl/glutamyl-tRNA(Asn/Gln) amidotransferase subunit C (Rhodopseudomonas palustris (strain BisB5)).